We begin with the raw amino-acid sequence, 288 residues long: Prepilin leader peptidase/N-methyltransferase (288 aa).

The helical transmembrane segment at 14-34 (FITLATVLGLLVGSFLNVVVY) threads the bilayer. Cys-71, Cys-74, Cys-96, and Cys-99 together coordinate Zn(2+). Transmembrane regions (helical) follow at residues 103–123 (ISVR…VVAW), 127–147 (ASVE…LSLI), 158–178 (IVLP…WVPL), 182–202 (VCGA…FKLV), 227–247 (VLPL…VYLL), and 254–274 (MGTA…AVLW).

This sequence belongs to the peptidase A24 family. Zn(2+) serves as cofactor.

The protein resides in the cell inner membrane. The catalysed reaction is Typically cleaves a -Gly-|-Phe- bond to release an N-terminal, basic peptide of 5-8 residues from type IV prepilin, and then N-methylates the new N-terminal amino group, the methyl donor being S-adenosyl-L-methionine.. In terms of biological role, plays an essential role in type IV pili and type II pseudopili formation by proteolytically removing the leader sequence from substrate proteins and subsequently monomethylating the alpha-amino group of the newly exposed N-terminal phenylalanine. In Pseudomonas putida (Arthrobacter siderocapsulatus), this protein is Prepilin leader peptidase/N-methyltransferase (pilD).